The chain runs to 364 residues: Histidinol-phosphate aminotransferase (364 aa).

Lysine 226 is modified (N6-(pyridoxal phosphate)lysine).

The protein belongs to the class-II pyridoxal-phosphate-dependent aminotransferase family. Histidinol-phosphate aminotransferase subfamily. In terms of assembly, homodimer. Pyridoxal 5'-phosphate is required as a cofactor.

It carries out the reaction L-histidinol phosphate + 2-oxoglutarate = 3-(imidazol-4-yl)-2-oxopropyl phosphate + L-glutamate. The protein operates within amino-acid biosynthesis; L-histidine biosynthesis; L-histidine from 5-phospho-alpha-D-ribose 1-diphosphate: step 7/9. This chain is Histidinol-phosphate aminotransferase, found in Campylobacter jejuni subsp. jejuni serotype O:2 (strain ATCC 700819 / NCTC 11168).